Reading from the N-terminus, the 256-residue chain is MAWSASQYVKFEDERTRPARDLLAQVPLQKIRRAVDLGCGPGNSTELIIERYGADGVSGLDSDMNMLEAARKRLPGTAFVEADLGSWQPMEPADLLFANAVFQWLPDHLDIFDRLMDGLSPGGVLAVQMPDNLGEPSHLAMEEAAHAGPWKTAFEAKSVRRKGLPAPSAYYSRLITKASRVDVWHTIYNHPMADAAAIVEWVKGTGLMPYLAHAGERYREAFLADYLQRVEKAYPKLSDGRVLLRFPRIFMVAVKG.

It belongs to the methyltransferase superfamily. Tam family.

The protein localises to the cytoplasm. The enzyme catalyses trans-aconitate + S-adenosyl-L-methionine = (E)-3-(methoxycarbonyl)pent-2-enedioate + S-adenosyl-L-homocysteine. In terms of biological role, catalyzes the S-adenosylmethionine monomethyl esterification of trans-aconitate. The chain is Trans-aconitate 2-methyltransferase from Rhizobium leguminosarum bv. trifolii (strain WSM2304).